The primary structure comprises 112 residues: Nitrogen regulatory protein P-II (112 aa).

O-UMP-tyrosine is present on Tyr51.

This sequence belongs to the P(II) protein family. In terms of assembly, homotrimer.

It localises to the plastid. The protein localises to the chloroplast. P-II indirectly controls the transcription of the glutamine synthetase gene (glnA). P-II prevents NR-II-catalyzed conversion of NR-I to NR-I-phosphate, the transcriptional activator of glnA. When P-II is uridylylated to P-II-UMP, these events are reversed. When the ratio of Gln to 2-ketoglutarate decreases, P-II is uridylylated to P-II-UMP, which causes the deadenylation of glutamine synthetase, so activating the enzyme. The sequence is that of Nitrogen regulatory protein P-II (glnB) from Pyropia yezoensis (Susabi-nori).